The following is a 315-amino-acid chain: Aspartate carbamoyltransferase catalytic subunit (315 aa).

Residues Arg-55 and Thr-56 each coordinate carbamoyl phosphate. L-aspartate is bound at residue Lys-83. Residues Arg-105, His-138, and Gln-141 each contribute to the carbamoyl phosphate site. Positions 171 and 225 each coordinate L-aspartate. Residues Gly-266 and Pro-267 each coordinate carbamoyl phosphate.

It belongs to the aspartate/ornithine carbamoyltransferase superfamily. ATCase family. In terms of assembly, heterododecamer (2C3:3R2) of six catalytic PyrB chains organized as two trimers (C3), and six regulatory PyrI chains organized as three dimers (R2).

The catalysed reaction is carbamoyl phosphate + L-aspartate = N-carbamoyl-L-aspartate + phosphate + H(+). The protein operates within pyrimidine metabolism; UMP biosynthesis via de novo pathway; (S)-dihydroorotate from bicarbonate: step 2/3. Functionally, catalyzes the condensation of carbamoyl phosphate and aspartate to form carbamoyl aspartate and inorganic phosphate, the committed step in the de novo pyrimidine nucleotide biosynthesis pathway. The sequence is that of Aspartate carbamoyltransferase catalytic subunit from Mycolicibacterium vanbaalenii (strain DSM 7251 / JCM 13017 / BCRC 16820 / KCTC 9966 / NRRL B-24157 / PYR-1) (Mycobacterium vanbaalenii).